The chain runs to 103 residues: Small ribosomal subunit protein uS10 (103 aa).

The protein belongs to the universal ribosomal protein uS10 family. As to quaternary structure, part of the 30S ribosomal subunit.

In terms of biological role, involved in the binding of tRNA to the ribosomes. The polypeptide is Small ribosomal subunit protein uS10 (Aromatoleum aromaticum (strain DSM 19018 / LMG 30748 / EbN1) (Azoarcus sp. (strain EbN1))).